We begin with the raw amino-acid sequence, 1942 residues long: GREB1-like protein (1942 aa).

Disordered stretches follow at residues 76–101 (SSNS…YLQG), 235–306 (PFSN…GTKT), 325–373 (MDGR…HRSW), and 1123–1256 (TKTA…RTQV). Residues 81–90 (EDMDDEDDSD) are compositionally biased toward acidic residues. Positions 237-253 (SNSASSSKPSSSSSLSS) are enriched in low complexity. Residues 338-362 (NPLSTPSHGYRTTETGDSPASTAMS) show a composition bias toward polar residues. Residues 1127-1155 (TSREERPREGERSSGETAEHDDLPMELER) are compositionally biased toward basic and acidic residues. The span at 1158-1171 (SNASAATRTSGSTT) shows a compositional bias: low complexity. A compositionally biased stretch (polar residues) spans 1172-1202 (ENGVSSSSILDKPSSQSDPCGSRTMMDSCSS). Residues 1212–1248 (SQAPSSSSTSSFSSASSSSSSSSSPAAQRPSQSTQAP) show a composition bias toward low complexity. A helical membrane pass occupies residues 1861-1881 (GVIFSGLLLYLCDSFVVSSLL).

It belongs to the GREB1 family.

The protein localises to the membrane. Functionally, plays a major role in early metanephros development. In Danio rerio (Zebrafish), this protein is GREB1-like protein (greb1l).